The following is a 245-amino-acid chain: Protein DEHYDRATION-INDUCED 19 homolog 4 (245 aa).

The protein belongs to the Di19 family.

This chain is Protein DEHYDRATION-INDUCED 19 homolog 4 (DI19-4), found in Oryza sativa subsp. japonica (Rice).